Consider the following 284-residue polypeptide: NAD kinase (284 aa).

D70 serves as the catalytic Proton acceptor. NAD(+) contacts are provided by residues 70-71 (DG), 139-140 (NE), K167, D169, L177, 180-185 (TAYNLS), and Q236.

Belongs to the NAD kinase family. Requires a divalent metal cation as cofactor.

It localises to the cytoplasm. It carries out the reaction NAD(+) + ATP = ADP + NADP(+) + H(+). In terms of biological role, involved in the regulation of the intracellular balance of NAD and NADP, and is a key enzyme in the biosynthesis of NADP. Catalyzes specifically the phosphorylation on 2'-hydroxyl of the adenosine moiety of NAD to yield NADP. This chain is NAD kinase, found in Helicobacter pylori (strain G27).